The following is a 144-amino-acid chain: Large ribosomal subunit protein uL11 (144 aa).

It belongs to the universal ribosomal protein uL11 family. As to quaternary structure, part of the ribosomal stalk of the 50S ribosomal subunit. Interacts with L10 and the large rRNA to form the base of the stalk. L10 forms an elongated spine to which L12 dimers bind in a sequential fashion forming a multimeric L10(L12)X complex. Post-translationally, one or more lysine residues are methylated.

Its function is as follows. Forms part of the ribosomal stalk which helps the ribosome interact with GTP-bound translation factors. This is Large ribosomal subunit protein uL11 from Neisseria gonorrhoeae (strain ATCC 700825 / FA 1090).